A 276-amino-acid polypeptide reads, in one-letter code: Triple specificity protein phosphatase PtpB (276 aa).

Catalysis depends on Cys-160, which acts as the Phosphocysteine intermediate. The interval 232–250 (LGVRAEYLAAARQTIDETY) is UIM-like region.

This sequence belongs to the protein-tyrosine phosphatase family. In terms of assembly, interacts (via UIM-like region) with host ubiquitin; activating the phosphatidylinositol phosphate phosphatase activity.

The protein localises to the secreted. It localises to the host cytoplasm. Its subcellular location is the host cell membrane. The enzyme catalyses O-phospho-L-tyrosyl-[protein] + H2O = L-tyrosyl-[protein] + phosphate. It catalyses the reaction O-phospho-L-seryl-[protein] + H2O = L-seryl-[protein] + phosphate. The catalysed reaction is O-phospho-L-threonyl-[protein] + H2O = L-threonyl-[protein] + phosphate. It carries out the reaction 1,2-dioctanoyl-sn-glycero-3-phospho-(1-D-myo-inositol-3-phosphate) + H2O = 1,2-dioctanoyl-sn-glycero-3-phospho-(1D-myo-inositol) + phosphate. The enzyme catalyses 1,2-dioctanoyl-sn-glycero-3-phospho-(1-D-myo-inositol-4-phosphate) + H2O = 1,2-dioctanoyl-sn-glycero-3-phospho-(1D-myo-inositol) + phosphate. It catalyses the reaction 1,2-dioctanoyl-sn-glycero-3-phospho-(1D-myo-inositol-5-phosphate) + H2O = 1,2-dioctanoyl-sn-glycero-3-phospho-(1D-myo-inositol) + phosphate. With respect to regulation, binding to host ubiquitin is required to activate the phosphatidylinositol phosphate phosphatase activity. Phosphatase activity is inhibited by sodium orthovanadate, a specific inhibitor of tyrosine phosphatases, but not by okadaic acid, an inhibitor of serine/threonine phosphatases. Inhibition of the enzyme reduces mycobacterial survival in infected macrophages. Inhibitors also enhance killing efficacy by first-line antibiotics. Its function is as follows. Essential virulence factor that promotes mycobacterial survival within host macrophages. Acts as a phosphatase that possesses triple substrate specificity toward phosphotyrosine, phosphoserine/threonine and phosphoinositides. Supports mycobacteria survival during infection by modulating the normal host signaling pathways, attenuating the bactericidal immune responses and promoting the host cell survival. Inhibits host pyroptosis by disrupting the membrane localization of host gasdermin-D (GSDMD): acts by catalyzing dephosphorylation of phosphatidylinositol (4,5)-bisphosphate and phosphatidylinositol 4-phosphate, thereby inhibiting the membrane targeting of GSDMD and subsequent cytokine release and pyroptosis. Inhibits host inflammatory responses and apoptosis through impeding the NF-kappa-B and MAPK signal pathways and TP53/p53 expression in the macrophage. Blocks the IL6/IL-6 production by down-regulating ERK1/2, p38 and p65 activity. Prevents macrophage cell death by activating the Akt pathway and blocking caspase 3 activity. Reduces the expression of iNOS in activated macrophages and inhibits the generation of destroying reactive nitrogen intermediate NO. The chain is Triple specificity protein phosphatase PtpB from Mycobacterium tuberculosis (strain ATCC 25618 / H37Rv).